The chain runs to 78 residues: D-alanyl carrier protein (78 aa).

In terms of domain architecture, Carrier spans 1–78; it reads MDFNQEVLSV…QIIKQLNELR (78 aa). Residue Ser36 is modified to O-(pantetheine 4'-phosphoryl)serine.

Belongs to the DltC family. In terms of processing, 4'-phosphopantetheine is transferred from CoA to a specific serine of apo-DCP.

Its subcellular location is the cytoplasm. The protein operates within cell wall biogenesis; lipoteichoic acid biosynthesis. Carrier protein involved in the D-alanylation of lipoteichoic acid (LTA). The loading of thioester-linked D-alanine onto DltC is catalyzed by D-alanine--D-alanyl carrier protein ligase DltA. The DltC-carried D-alanyl group is further transferred to cell membrane phosphatidylglycerol (PG) by forming an ester bond, probably catalyzed by DltD. D-alanylation of LTA plays an important role in modulating the properties of the cell wall in Gram-positive bacteria, influencing the net charge of the cell wall. The chain is D-alanyl carrier protein from Bacillus licheniformis (strain ATCC 14580 / DSM 13 / JCM 2505 / CCUG 7422 / NBRC 12200 / NCIMB 9375 / NCTC 10341 / NRRL NRS-1264 / Gibson 46).